The chain runs to 781 residues: Death domain-containing protein 1 (781 aa).

2 ZU5 domains span residues 167–301 (IMEK…VSCL) and 302–483 (KKES…VLHL). Positions 679–764 (DNLLHWLAEE…DLAEELKFKW (86 aa)) constitute a Death domain.

The chain is Death domain-containing protein 1 (DTHD1) from Homo sapiens (Human).